The chain runs to 329 residues: Olfactory receptor 10J3 (329 aa).

Residues Met1–Leu26 lie on the Extracellular side of the membrane. The N-linked (GlcNAc...) asparagine glycan is linked to Asn5. A helical transmembrane segment spans residues Val27 to Met47. Topologically, residues Thr48–His55 are cytoplasmic. The chain crosses the membrane as a helical span at residues Leu56 to Val76. Topologically, residues Ala77–Thr100 are extracellular. Cys98 and Cys190 are joined by a disulfide. The chain crosses the membrane as a helical span at residues Gln101–Tyr121. The Cytoplasmic segment spans residues Asp122–Arg140. Residues Ala141 to Val161 form a helical membrane-spanning segment. At Thr162 to Ile198 the chain is on the extracellular side. A helical transmembrane segment spans residues Ile199–Ser218. The Cytoplasmic segment spans residues Tyr219–Ala238. The chain crosses the membrane as a helical span at residues Phe239–Ile259. Topologically, residues Tyr260–Asp272 are extracellular. The chain crosses the membrane as a helical span at residues Arg273–Glu293. Residues Glu294 to Tyr329 lie on the Cytoplasmic side of the membrane.

Belongs to the G-protein coupled receptor 1 family.

It is found in the cell membrane. In terms of biological role, odorant receptor. The protein is Olfactory receptor 10J3 (OR10J3) of Homo sapiens (Human).